Consider the following 415-residue polypeptide: 3-isopropylmalate dehydratase large subunit (415 aa).

[4Fe-4S] cluster is bound by residues cysteine 295, cysteine 353, and cysteine 356.

Belongs to the aconitase/IPM isomerase family. LeuC type 2 subfamily. In terms of assembly, heterodimer of LeuC and LeuD. [4Fe-4S] cluster is required as a cofactor.

The enzyme catalyses (2R,3S)-3-isopropylmalate = (2S)-2-isopropylmalate. It functions in the pathway amino-acid biosynthesis; L-leucine biosynthesis; L-leucine from 3-methyl-2-oxobutanoate: step 2/4. Its function is as follows. Catalyzes the isomerization between 2-isopropylmalate and 3-isopropylmalate, via the formation of 2-isopropylmaleate. The protein is 3-isopropylmalate dehydratase large subunit of Pyrobaculum arsenaticum (strain DSM 13514 / JCM 11321 / PZ6).